The chain runs to 234 residues: Endonuclease NucS (234 aa).

Belongs to the NucS endonuclease family.

The protein localises to the cytoplasm. In terms of biological role, cleaves both 3' and 5' ssDNA extremities of branched DNA structures. The sequence is that of Endonuclease NucS from Bifidobacterium adolescentis (strain ATCC 15703 / DSM 20083 / NCTC 11814 / E194a).